A 707-amino-acid polypeptide reads, in one-letter code: Probable potassium transporter 17 (707 aa).

The disordered stretch occupies residues 1-25 (MDLEAGSIRPRSDGEGGGPAAGRET). The Cytoplasmic segment spans residues 1-34 (MDLEAGSIRPRSDGEGGGPAAGRETDDSNVWKDL). A helical membrane pass occupies residues 35-55 (FLAYKTLGVVFGGLVTSPLYV). Residues 56–71 (YPSMNLSSPTEADYLG) lie on the Extracellular side of the membrane. Residue Asn60 is glycosylated (N-linked (GlcNAc...) asparagine). Residues 72-92 (IYSIMFWTLTLIGVVKYVCIA) form a helical membrane-spanning segment. Topologically, residues 93–157 (LNADDHGEGG…FFEQSITARR (65 aa)) are cytoplasmic. A helical transmembrane segment spans residues 158-178 (VLLFVAVLGMCMLIGDGILTP). At 179–194 (AISVLSAIDGIRGPFP) the chain is on the extracellular side. The helical transmembrane segment at 195-215 (TVSKPVVEALSAAILIGLFLL) threads the bilayer. Topologically, residues 216–222 (QKYGTSK) are cytoplasmic. A helical transmembrane segment spans residues 223-243 (VSFLFSPIMAAWTFTTPIIGL). Topologically, residues 244-276 (YSIVHYYPGIFKAISPYYIVHFFLRNKRQGWQL) are extracellular. Residues 277–297 (LGGTVLCITGAEAMFADLGHF) form a helical membrane-spanning segment. Residues 298-305 (SKKAIQIA) lie on the Cytoplasmic side of the membrane. Residues 306 to 326 (FLSSIYPSLVLTYAGQTAYLI) form a helical membrane-spanning segment. The Extracellular segment spans residues 327 to 343 (NNVNDFGDGFYKFVPRP). Residues 344 to 364 (VYWPMFVVATLAAIVASQSLI) traverse the membrane as a helical segment. Residues 365–402 (SATFSVIKQSVVLDYFPRVKVVHTSQHKEGEVYSPEIN) are Cytoplasmic-facing. Residues 403 to 423 (YILMVLCVGVILGFGGGKAIG) traverse the membrane as a helical segment. At 424-427 (NAFG) the chain is on the extracellular side. The chain crosses the membrane as a helical span at residues 428-448 (VVVIMVMLITTVLLTLVMIII). Residues 449 to 454 (WRTPLV) lie on the Cytoplasmic side of the membrane. A helical membrane pass occupies residues 455 to 475 (LAGLYFVPFFIMEGAYVSAVF). Topologically, residues 476-480 (TKIPE) are extracellular. Residues 481-501 (GGWLPFAVSITLAMIMFGWYY) form a helical membrane-spanning segment. Topologically, residues 502-707 (GRQRKFEYEM…RVEIGMLYKV (206 aa)) are cytoplasmic.

The protein belongs to the HAK/KUP transporter (TC 2.A.72.3) family.

Its subcellular location is the membrane. High-affinity potassium transporter. This Oryza sativa subsp. japonica (Rice) protein is Probable potassium transporter 17 (HAK17).